The sequence spans 101 residues: Small ribosomal subunit protein uS14A (101 aa).

Residues 31–74 (IRKPSTPEADRAAAQAALQRLPRDASPVRLRNRDAADGRPRGHL) are disordered. Over residues 61 to 70 (RNRDAADGRP) the composition is skewed to basic and acidic residues.

This sequence belongs to the universal ribosomal protein uS14 family. Part of the 30S ribosomal subunit. Contacts proteins S3 and S10.

Functionally, binds 16S rRNA, required for the assembly of 30S particles and may also be responsible for determining the conformation of the 16S rRNA at the A site. This is Small ribosomal subunit protein uS14A from Nocardia farcinica (strain IFM 10152).